We begin with the raw amino-acid sequence, 278 residues long: 4-diphosphocytidyl-2-C-methyl-D-erythritol kinase (278 aa).

K9 is an active-site residue. 89–99 (PVASGIGGGSA) contributes to the ATP binding site. D128 is a catalytic residue.

This sequence belongs to the GHMP kinase family. IspE subfamily.

It catalyses the reaction 4-CDP-2-C-methyl-D-erythritol + ATP = 4-CDP-2-C-methyl-D-erythritol 2-phosphate + ADP + H(+). The protein operates within isoprenoid biosynthesis; isopentenyl diphosphate biosynthesis via DXP pathway; isopentenyl diphosphate from 1-deoxy-D-xylulose 5-phosphate: step 3/6. Its function is as follows. Catalyzes the phosphorylation of the position 2 hydroxy group of 4-diphosphocytidyl-2C-methyl-D-erythritol. The protein is 4-diphosphocytidyl-2-C-methyl-D-erythritol kinase of Cereibacter sphaeroides (strain ATCC 17025 / ATH 2.4.3) (Rhodobacter sphaeroides).